The following is a 207-amino-acid chain: Holliday junction branch migration complex subunit RuvA (207 aa).

Positions 1–65 (MYDYIRGILT…ETEHVLYGFS (65 aa)) are domain I. Positions 66 to 144 (SRRERECFRM…DLLPLDSKAI (79 aa)) are domain II. The interval 145–155 (ASWESVKPSCM) is flexible linker. The segment at 155–207 (MDEGIQALAALGYSKPSAERMIAEAMSELPENASLAEILPIALKKNLQGLNKS) is domain III.

This sequence belongs to the RuvA family. Homotetramer. Forms an RuvA(8)-RuvB(12)-Holliday junction (HJ) complex. HJ DNA is sandwiched between 2 RuvA tetramers; dsDNA enters through RuvA and exits via RuvB. An RuvB hexamer assembles on each DNA strand where it exits the tetramer. Each RuvB hexamer is contacted by two RuvA subunits (via domain III) on 2 adjacent RuvB subunits; this complex drives branch migration. In the full resolvosome a probable DNA-RuvA(4)-RuvB(12)-RuvC(2) complex forms which resolves the HJ.

Its subcellular location is the cytoplasm. Functionally, the RuvA-RuvB-RuvC complex processes Holliday junction (HJ) DNA during genetic recombination and DNA repair, while the RuvA-RuvB complex plays an important role in the rescue of blocked DNA replication forks via replication fork reversal (RFR). RuvA specifically binds to HJ cruciform DNA, conferring on it an open structure. The RuvB hexamer acts as an ATP-dependent pump, pulling dsDNA into and through the RuvAB complex. HJ branch migration allows RuvC to scan DNA until it finds its consensus sequence, where it cleaves and resolves the cruciform DNA. The sequence is that of Holliday junction branch migration complex subunit RuvA from Chlamydia caviae (strain ATCC VR-813 / DSM 19441 / 03DC25 / GPIC) (Chlamydophila caviae).